A 715-amino-acid chain; its full sequence is Probable phospholipase YOR022C, mitochondrial (715 aa).

The N-terminal 22 residues, Met1–Leu22, are a transit peptide targeting the mitochondrion. 3 disordered regions span residues Tyr161 to Glu180, Thr242 to Ile268, and Tyr311 to Arg340. The span at Thr242 to Thr251 shows a compositional bias: low complexity. Polar residues predominate over residues Tyr311–Ser324. Ser501 is a catalytic residue. Positions Leu519–Ser700 constitute a DDHD domain.

Belongs to the PA-PLA1 family.

The protein localises to the mitochondrion. In terms of biological role, probable phospholipase that hydrolyzes phosphatidic acid. The protein is Probable phospholipase YOR022C, mitochondrial of Saccharomyces cerevisiae (strain ATCC 204508 / S288c) (Baker's yeast).